We begin with the raw amino-acid sequence, 212 residues long: Ropporin-1A (212 aa).

An RIIa domain is found at 12-49 (PELPKMLKEFAKAAIRVQPQDLIQWAADYFEALSRGET). Residue Ser56 is modified to Phosphoserine. The interval 209–212 (VQLE) is interaction with RHPN1.

It belongs to the ropporin family. Homodimer. Interacts with AKAP3 and RHPN1. May interact with SPA17. Interacts with FSCB; the interaction increases upon spermatozoa capacitation conditions. Interacts with CFAP61. Sumoylated, sumoylation decreases upon spermatozoa capacitation conditions. As to expression, testis specific in adult. Overexpressed in hematologic tumor cells.

The protein localises to the cell projection. It is found in the cilium. Its subcellular location is the flagellum. Functionally, important for male fertility. With ROPN1L, involved in fibrous sheath integrity and sperm motility, plays a role in PKA-dependent signaling processes required for spermatozoa capacitation. The sequence is that of Ropporin-1A (ROPN1) from Homo sapiens (Human).